The primary structure comprises 154 residues: Calmodulin-like protein 4 (154 aa).

EF-hand domains lie at 7–42, 43–78, 80–115, and 116–151; these read EQMV…LGLE, PTDQ…KMKD, DGDE…LGEK, and MTDE…AERK. Asp-20, Asn-22, Asp-24, Cys-26, Glu-31, Asp-56, Asp-58, Asn-60, Glu-67, Asp-93, Asp-95, Asn-97, and Glu-104 together coordinate Ca(2+). The residue at position 115 (Lys-115) is an N6,N6,N6-trimethyllysine. Residues Asp-129, Asp-131, Asp-133, Gln-135, and Glu-140 each coordinate Ca(2+).

The protein belongs to the calmodulin family.

In terms of biological role, potential calcium sensor. This chain is Calmodulin-like protein 4 (CML4), found in Oryza sativa subsp. japonica (Rice).